The primary structure comprises 207 residues: Octanoyltransferase (207 aa).

One can recognise a BPL/LPL catalytic domain in the interval 27–203 (ADTEDELWVV…HLETQFTPKA (177 aa)). Substrate contacts are provided by residues 66–73 (RGGQITYH), 133–135 (SLG), and 146–148 (GLA). Cysteine 164 functions as the Acyl-thioester intermediate in the catalytic mechanism.

The protein belongs to the LipB family.

The protein resides in the cytoplasm. The enzyme catalyses octanoyl-[ACP] + L-lysyl-[protein] = N(6)-octanoyl-L-lysyl-[protein] + holo-[ACP] + H(+). It participates in protein modification; protein lipoylation via endogenous pathway; protein N(6)-(lipoyl)lysine from octanoyl-[acyl-carrier-protein]: step 1/2. In terms of biological role, catalyzes the transfer of endogenously produced octanoic acid from octanoyl-acyl-carrier-protein onto the lipoyl domains of lipoate-dependent enzymes. Lipoyl-ACP can also act as a substrate although octanoyl-ACP is likely to be the physiological substrate. The chain is Octanoyltransferase from Neisseria meningitidis serogroup A / serotype 4A (strain DSM 15465 / Z2491).